The following is a 233-amino-acid chain: Phosphoribosylformylglycinamidine synthase subunit PurQ (233 aa).

The region spanning 3 to 233 (SAVLVFPGIN…GLVEHLKTAA (231 aa)) is the Glutamine amidotransferase type-1 domain. The active-site Nucleophile is C87. Active-site residues include H204 and E206.

As to quaternary structure, part of the FGAM synthase complex composed of 1 PurL, 1 PurQ and 2 PurS subunits.

It localises to the cytoplasm. The catalysed reaction is N(2)-formyl-N(1)-(5-phospho-beta-D-ribosyl)glycinamide + L-glutamine + ATP + H2O = 2-formamido-N(1)-(5-O-phospho-beta-D-ribosyl)acetamidine + L-glutamate + ADP + phosphate + H(+). The enzyme catalyses L-glutamine + H2O = L-glutamate + NH4(+). It participates in purine metabolism; IMP biosynthesis via de novo pathway; 5-amino-1-(5-phospho-D-ribosyl)imidazole from N(2)-formyl-N(1)-(5-phospho-D-ribosyl)glycinamide: step 1/2. Part of the phosphoribosylformylglycinamidine synthase complex involved in the purines biosynthetic pathway. Catalyzes the ATP-dependent conversion of formylglycinamide ribonucleotide (FGAR) and glutamine to yield formylglycinamidine ribonucleotide (FGAM) and glutamate. The FGAM synthase complex is composed of three subunits. PurQ produces an ammonia molecule by converting glutamine to glutamate. PurL transfers the ammonia molecule to FGAR to form FGAM in an ATP-dependent manner. PurS interacts with PurQ and PurL and is thought to assist in the transfer of the ammonia molecule from PurQ to PurL. This is Phosphoribosylformylglycinamidine synthase subunit PurQ from Rhodopseudomonas palustris (strain HaA2).